We begin with the raw amino-acid sequence, 63 residues long: MPYSPSLILMGHTHTDATVYTTLKLPYSHTPIHGPFSLNQYQMHPHHYARHLPQRSIPCAIYP.

This is an uncharacterized protein from Saccharomyces cerevisiae (strain ATCC 204508 / S288c) (Baker's yeast).